We begin with the raw amino-acid sequence, 279 residues long: Large ribosomal subunit protein uL2 (279 aa).

A disordered region spans residues 224–279 (AMNAVDHPMGGGRGHSKGGNIPRSPWNQPSRGLKTRPKKSWDWMIVSDRRKNKAGK).

Belongs to the universal ribosomal protein uL2 family. In terms of assembly, part of the 50S ribosomal subunit. Forms a bridge to the 30S subunit in the 70S ribosome.

One of the primary rRNA binding proteins. Required for association of the 30S and 50S subunits to form the 70S ribosome, for tRNA binding and peptide bond formation. It has been suggested to have peptidyltransferase activity; this is somewhat controversial. Makes several contacts with the 16S rRNA in the 70S ribosome. This Elusimicrobium minutum (strain Pei191) protein is Large ribosomal subunit protein uL2.